Reading from the N-terminus, the 213-residue chain is Adenylate kinase (213 aa).

10–15 serves as a coordination point for ATP; the sequence is GSGKGS. Residues 30 to 60 form an NMP region; sequence STGNLFRAILKEDSELARKIKEINVSGGKLV. AMP-binding positions include T31, R36, 58-60, 87-90, and Q94; these read KLV and GYPR. The tract at residues 123-160 is LID; it reads GRWMCPKCAGIYNIHFKKPQVDGVCDNDQATLYQRADD. Residue R124 participates in ATP binding. The Zn(2+) site is built by C127 and C130. 133 to 134 provides a ligand contact to ATP; sequence IY. Zn(2+) contacts are provided by C147 and D150. R157 and R168 together coordinate AMP. Q196 contacts ATP.

It belongs to the adenylate kinase family. In terms of assembly, monomer.

It is found in the cytoplasm. It carries out the reaction AMP + ATP = 2 ADP. Its pathway is purine metabolism; AMP biosynthesis via salvage pathway; AMP from ADP: step 1/1. Functionally, catalyzes the reversible transfer of the terminal phosphate group between ATP and AMP. Plays an important role in cellular energy homeostasis and in adenine nucleotide metabolism. This Ureaplasma urealyticum serovar 10 (strain ATCC 33699 / Western) protein is Adenylate kinase.